A 237-amino-acid polypeptide reads, in one-letter code: Phosphoribosylaminoimidazole-succinocarboxamide synthase (237 aa).

The protein belongs to the SAICAR synthetase family.

It catalyses the reaction 5-amino-1-(5-phospho-D-ribosyl)imidazole-4-carboxylate + L-aspartate + ATP = (2S)-2-[5-amino-1-(5-phospho-beta-D-ribosyl)imidazole-4-carboxamido]succinate + ADP + phosphate + 2 H(+). Its pathway is purine metabolism; IMP biosynthesis via de novo pathway; 5-amino-1-(5-phospho-D-ribosyl)imidazole-4-carboxamide from 5-amino-1-(5-phospho-D-ribosyl)imidazole-4-carboxylate: step 1/2. The polypeptide is Phosphoribosylaminoimidazole-succinocarboxamide synthase (Fusobacterium nucleatum subsp. nucleatum (strain ATCC 25586 / DSM 15643 / BCRC 10681 / CIP 101130 / JCM 8532 / KCTC 2640 / LMG 13131 / VPI 4355)).